A 315-amino-acid polypeptide reads, in one-letter code: Homoserine kinase (315 aa).

Position 97 to 107 (P97 to T107) interacts with ATP.

It belongs to the GHMP kinase family. Homoserine kinase subfamily.

It is found in the cytoplasm. It carries out the reaction L-homoserine + ATP = O-phospho-L-homoserine + ADP + H(+). Its pathway is amino-acid biosynthesis; L-threonine biosynthesis; L-threonine from L-aspartate: step 4/5. Functionally, catalyzes the ATP-dependent phosphorylation of L-homoserine to L-homoserine phosphate. This Prochlorococcus marinus (strain MIT 9312) protein is Homoserine kinase.